The primary structure comprises 97 residues: Small ribosomal subunit protein bS20 (97 aa).

The protein belongs to the bacterial ribosomal protein bS20 family.

Functionally, binds directly to 16S ribosomal RNA. This chain is Small ribosomal subunit protein bS20, found in Prochlorococcus marinus (strain MIT 9515).